The following is a 103-amino-acid chain: MRIKKGDSVLVTTGKDAGKKGKVLRVIPDKNRVVIEGVNRVKKHQKPSRSLPQGGILKIETPLNASNVMLVCSRCNKPTRIAHKIMENGEKVRICKQCGEALD.

This sequence belongs to the universal ribosomal protein uL24 family. In terms of assembly, part of the 50S ribosomal subunit.

One of two assembly initiator proteins, it binds directly to the 5'-end of the 23S rRNA, where it nucleates assembly of the 50S subunit. Functionally, one of the proteins that surrounds the polypeptide exit tunnel on the outside of the subunit. The protein is Large ribosomal subunit protein uL24 of Syntrophomonas wolfei subsp. wolfei (strain DSM 2245B / Goettingen).